The sequence spans 1114 residues: Translation initiation factor IF-2 (1114 aa).

2 disordered regions span residues 69–102 (SIKKDNFKQNKSPSISSKKETPLKDNSNKKPLLI) and 181–507 (INNN…KRRA). Positions 85 to 96 (SKKETPLKDNSN) are enriched in basic and acidic residues. Positions 181 to 198 (INNNVKSNESSQNISSAG) are enriched in polar residues. Positions 240–251 (INPNKQNNKQNI) are enriched in low complexity. The segment covering 252–261 (AFKQTGSNRI) has biased composition (polar residues). 3 stretches are compositionally biased toward low complexity: residues 262 to 278 (GSPNRPGMPNNRPGLRN), 290 to 309 (NRQGNPNRPGMPNNRPGLRN), and 321 to 337 (NRQGNPNRPGMPNNRPG). Residues 365–375 (NSEKDNKDKNN) show a composition bias toward basic and acidic residues. Low complexity predominate over residues 376–385 (NAKQNINGPN). Over residues 417-431 (GKTDWDDSAKLEALR) the composition is skewed to basic and acidic residues. Basic residues predominate over residues 489-505 (KQFKKKKKETTRQRQKR). Residues 606-778 (RRPPVITVMG…ILLVSEVEDL (173 aa)) form the tr-type G domain. The G1 stretch occupies residues 615–622 (GHVDHGKT). A GTP-binding site is contributed by 615–622 (GHVDHGKT). Residues 640-644 (GITQH) form a G2 region. The tract at residues 665 to 668 (DTPG) is G3. GTP-binding positions include 665-669 (DTPGH) and 719-722 (NKID). Residues 719 to 722 (NKID) form a G4 region. Residues 755–757 (SAI) are G5.

This sequence belongs to the TRAFAC class translation factor GTPase superfamily. Classic translation factor GTPase family. IF-2 subfamily.

The protein localises to the cytoplasm. Its function is as follows. One of the essential components for the initiation of protein synthesis. Protects formylmethionyl-tRNA from spontaneous hydrolysis and promotes its binding to the 30S ribosomal subunits. Also involved in the hydrolysis of GTP during the formation of the 70S ribosomal complex. This is Translation initiation factor IF-2 from Prochlorococcus marinus (strain MIT 9301).